The primary structure comprises 199 residues: 7-methyl-GTP pyrophosphatase (199 aa).

Aspartate 76 (proton acceptor) is an active-site residue.

Belongs to the Maf family. YceF subfamily. Requires a divalent metal cation as cofactor.

It localises to the cytoplasm. The catalysed reaction is N(7)-methyl-GTP + H2O = N(7)-methyl-GMP + diphosphate + H(+). In terms of biological role, nucleoside triphosphate pyrophosphatase that hydrolyzes 7-methyl-GTP (m(7)GTP). May have a dual role in cell division arrest and in preventing the incorporation of modified nucleotides into cellular nucleic acids. This is 7-methyl-GTP pyrophosphatase from Hahella chejuensis (strain KCTC 2396).